Reading from the N-terminus, the 105-residue chain is Large ribosomal subunit protein uL22 (105 aa).

This sequence belongs to the universal ribosomal protein uL22 family. As to quaternary structure, part of the 50S ribosomal subunit.

Functionally, this protein binds specifically to 23S rRNA; its binding is stimulated by other ribosomal proteins, e.g. L4, L17, and L20. It is important during the early stages of 50S assembly. It makes multiple contacts with different domains of the 23S rRNA in the assembled 50S subunit and ribosome. Its function is as follows. The globular domain of the protein is located near the polypeptide exit tunnel on the outside of the subunit, while an extended beta-hairpin is found that lines the wall of the exit tunnel in the center of the 70S ribosome. This is Large ribosomal subunit protein uL22 from Sulfurimonas denitrificans (strain ATCC 33889 / DSM 1251) (Thiomicrospira denitrificans (strain ATCC 33889 / DSM 1251)).